Consider the following 953-residue polypeptide: Nonsense-mediated mRNA decay factor SMG8 (953 aa).

Disordered stretches follow at residues 571–604 and 629–653; these read AQDA…CSQP and PCFD…ESNN. Positions 574–586 are enriched in acidic residues; it reads AELDPDEEDEELP. Over residues 595-604 the composition is skewed to polar residues; it reads ITQSNGCSQP. Residues 634-653 are compositionally biased toward low complexity; sequence SSSSEAESTCSGTSSEESNN.

It belongs to the SMG8 family.

In terms of biological role, involved in nonsense-mediated decay (NMD) of mRNAs containing premature stop codons. Probable component of kinase complex containing nonC and recruited to stalled ribosomes. The sequence is that of Nonsense-mediated mRNA decay factor SMG8 from Drosophila persimilis (Fruit fly).